Here is a 112-residue protein sequence, read N- to C-terminus: Type III inner-rod protein PscI (112 aa).

It belongs to the YscI/HrpB family. In terms of assembly, homomultimer (through its C-terminal region).

Functionally, component of the type III secretion (T3S) injectisome that translocates effector toxins into host cells, facilitating the establishment and dissemination of infection. Polymerizes into flexible and regularly twisted fibrils and plays an essential role in needle assembly. The sequence is that of Type III inner-rod protein PscI (pscI) from Pseudomonas aeruginosa (strain ATCC 15692 / DSM 22644 / CIP 104116 / JCM 14847 / LMG 12228 / 1C / PRS 101 / PAO1).